The primary structure comprises 551 residues: 2,3-bisphosphoglycerate-independent phosphoglycerate mutase (551 aa).

Positions 22 and 74 each coordinate Mn(2+). Serine 74 (phosphoserine intermediate) is an active-site residue. Residues histidine 135, 165 to 166, arginine 201, arginine 208, and 281 to 284 each bind substrate; these read RD and RGDR. Mn(2+) is bound at residue aspartate 319. Lysine 356 lines the substrate pocket. Residues aspartate 424, histidine 428, aspartate 465, histidine 466, and histidine 495 each coordinate Mn(2+).

Belongs to the BPG-independent phosphoglycerate mutase family. Monomer. Mn(2+) serves as cofactor.

Its subcellular location is the cytoplasm. The catalysed reaction is (2R)-2-phosphoglycerate = (2R)-3-phosphoglycerate. It functions in the pathway carbohydrate degradation; glycolysis; pyruvate from D-glyceraldehyde 3-phosphate: step 3/5. Its function is as follows. Catalyzes the interconversion of 2-phosphoglycerate (2-PGA) and 3-phosphoglycerate (3-PGA). The chain is 2,3-bisphosphoglycerate-independent phosphoglycerate mutase from Trypanosoma brucei brucei (strain 927/4 GUTat10.1).